Consider the following 106-residue polypeptide: Large ribosomal subunit protein P1A (106 aa).

The disordered stretch occupies residues 74 to 106 (AGGGAAAEEAAEEEKEEEAKEESDDDMGFGLFD). Positions 82-100 (EAAEEEKEEEAKEESDDDM) are enriched in acidic residues.

This sequence belongs to the eukaryotic ribosomal protein P1/P2 family. In terms of assembly, component of the large ribosomal subunit (LSU). Mature ribosomes consist of a small (40S) and a large (60S) subunit. The 40S subunit contains about 32 different proteins and 1 molecule of RNA (18S). The 60S subunit contains 45 different proteins and 3 molecules of RNA (25S, 5.8S and 5S). The 5 acidic ribosomal P-proteins form the stalk structure of the 60S subunit. They are organized as a pentameric complex in which uL10/P0 interacts with 2 heterodimers, P1A-P2B and P1B-P2A. Post-translationally, phosphorylated.

It is found in the cytoplasm. Its function is as follows. Component of the ribosome, a large ribonucleoprotein complex responsible for the synthesis of proteins in the cell. The small ribosomal subunit (SSU) binds messenger RNAs (mRNAs) and translates the encoded message by selecting cognate aminoacyl-transfer RNA (tRNA) molecules. The large subunit (LSU) contains the ribosomal catalytic site termed the peptidyl transferase center (PTC), which catalyzes the formation of peptide bonds, thereby polymerizing the amino acids delivered by tRNAs into a polypeptide chain. The nascent polypeptides leave the ribosome through a tunnel in the LSU and interact with protein factors that function in enzymatic processing, targeting, and the membrane insertion of nascent chains at the exit of the ribosomal tunnel. This chain is Large ribosomal subunit protein P1A (RPP1A), found in Candida albicans (strain SC5314 / ATCC MYA-2876) (Yeast).